A 328-amino-acid polypeptide reads, in one-letter code: Olfactory receptor 13A1 (328 aa).

Residues 1–43 are Extracellular-facing; the sequence is MKLWMESHLIVPETRPSPRMMSNQTLVTEFILQGFSEHPEYRV. The N-linked (GlcNAc...) asparagine glycan is linked to N23. The helical transmembrane segment at 44-64 threads the bilayer; that stretch reads FLFSCFLFLYSGALTGNVLIT. Residues 65–72 are Cytoplasmic-facing; sequence LAITFNPG. Residues 73–93 form a helical membrane-spanning segment; that stretch reads LHAPMYFFLLNLATMDIICTS. Residues 94–117 are Extracellular-facing; that stretch reads SIMPKALASLVSEESSISYGGCMA. C115 and C207 form a disulfide bridge. Residues 118-138 form a helical membrane-spanning segment; it reads QLYFLTWAASSELLLLTVMAY. Residues 139–157 lie on the Cytoplasmic side of the membrane; that stretch reads DRYAAICHPLHYSSMMSKV. The helical transmembrane segment at 158–178 threads the bilayer; that stretch reads FCSGLATAVWLLCAVNTAIHT. At 179–215 the chain is on the extracellular side; the sequence is GLMLRLDFCGPNVIIHFFCEVPPLLLLSCSSTYVNGV. The helical transmembrane segment at 216–235 threads the bilayer; that stretch reads MIVLADAFYGIVNFLMTIAS. The Cytoplasmic portion of the chain corresponds to 236 to 255; it reads YGFIVSSILKVKTAWGRQKA. A helical transmembrane segment spans residues 256-276; it reads FSTCSSHLTVVCMYYTAVFYA. Topologically, residues 277–289 are extracellular; it reads YISPVSGYSAGKS. The helical transmembrane segment at 290 to 310 threads the bilayer; that stretch reads KLAGLLYTVLSPTLNPLIYTL. At 311–328 the chain is on the cytoplasmic side; the sequence is RNKEVKAALRKLFPFFRN.

It belongs to the G-protein coupled receptor 1 family.

It is found in the cell membrane. Odorant receptor. This Homo sapiens (Human) protein is Olfactory receptor 13A1 (OR13A1).